Here is a 160-residue protein sequence, read N- to C-terminus: Protein cornichon homolog 2 (160 aa).

Residues 1-10 (MAFTFAAFCY) lie on the Cytoplasmic side of the membrane. A helical membrane pass occupies residues 11-31 (MLTLVLCASLIFFVIWHIIAF). At 32 to 72 (DELRTDFKNPIDQGNPARARERLKNIERICCLLRKLVVPEY) the chain is on the lumenal side. A helical transmembrane segment spans residues 73–93 (CIHGLFCLMFLCAAEWVTLGL). Residues 94–138 (NLPLLLYHLWRYFHRPSDGSEGLFDAVSIMDADILGYCQKEAWCK) lie on the Cytoplasmic side of the membrane. Residues 139-159 (LAFYLLSFFYYLYSMVYTLVS) form a helical membrane-spanning segment. A topological domain (lumenal) is located at residue Phe-160.

The protein belongs to the cornichon family. As to quaternary structure, interacts with HBEGF. Expressed in the odd-numbered neuromeres (r3 and r5) of the developing hindbrain.

The protein resides in the membrane. Its function is as follows. Regulates the trafficking and gating properties of AMPA-selective glutamate receptors (AMPARs). Plays an important role in the proper development of cranial nerves by facilitating the secretion of HBEGF. This chain is Protein cornichon homolog 2 (CNIH2), found in Gallus gallus (Chicken).